A 261-amino-acid polypeptide reads, in one-letter code: Triosephosphate isomerase (261 aa).

Residue 10–12 (NWK) coordinates substrate. H100 acts as the Electrophile in catalysis. E172 acts as the Proton acceptor in catalysis. Substrate-binding positions include G178, S218, and 239 to 240 (GG).

It belongs to the triosephosphate isomerase family. In terms of assembly, homodimer.

Its subcellular location is the cytoplasm. The catalysed reaction is D-glyceraldehyde 3-phosphate = dihydroxyacetone phosphate. The protein operates within carbohydrate biosynthesis; gluconeogenesis. It participates in carbohydrate degradation; glycolysis; D-glyceraldehyde 3-phosphate from glycerone phosphate: step 1/1. Functionally, involved in the gluconeogenesis. Catalyzes stereospecifically the conversion of dihydroxyacetone phosphate (DHAP) to D-glyceraldehyde-3-phosphate (G3P). The polypeptide is Triosephosphate isomerase (Nocardia farcinica (strain IFM 10152)).